The chain runs to 199 residues: Fe/S biogenesis protein NfuA (199 aa).

Residues Cys-151 and Cys-154 each coordinate [4Fe-4S] cluster.

It belongs to the NfuA family. In terms of assembly, homodimer. It depends on [4Fe-4S] cluster as a cofactor.

Functionally, involved in iron-sulfur cluster biogenesis. Binds a 4Fe-4S cluster, can transfer this cluster to apoproteins, and thereby intervenes in the maturation of Fe/S proteins. Could also act as a scaffold/chaperone for damaged Fe/S proteins. This Xanthomonas euvesicatoria pv. vesicatoria (strain 85-10) (Xanthomonas campestris pv. vesicatoria) protein is Fe/S biogenesis protein NfuA.